The primary structure comprises 444 residues: tRNA-2-methylthio-N(6)-dimethylallyladenosine synthase (444 aa).

The MTTase N-terminal domain occupies 8–122 (KTFYIETFGC…LAEMLVQIES (115 aa)). [4Fe-4S] cluster is bound by residues Cys17, Cys53, Cys85, Cys160, Cys164, and Cys167. Residues 146–376 (RGNAHRGYIT…MEHQREIQRA (231 aa)) form the Radical SAM core domain. Residues 379–444 (RKHIGETIEV…PNSLVGELVG (66 aa)) enclose the TRAM domain.

It belongs to the methylthiotransferase family. MiaB subfamily. In terms of assembly, monomer. [4Fe-4S] cluster is required as a cofactor.

It is found in the cytoplasm. It catalyses the reaction N(6)-dimethylallyladenosine(37) in tRNA + (sulfur carrier)-SH + AH2 + 2 S-adenosyl-L-methionine = 2-methylsulfanyl-N(6)-dimethylallyladenosine(37) in tRNA + (sulfur carrier)-H + 5'-deoxyadenosine + L-methionine + A + S-adenosyl-L-homocysteine + 2 H(+). In terms of biological role, catalyzes the methylthiolation of N6-(dimethylallyl)adenosine (i(6)A), leading to the formation of 2-methylthio-N6-(dimethylallyl)adenosine (ms(2)i(6)A) at position 37 in tRNAs that read codons beginning with uridine. The sequence is that of tRNA-2-methylthio-N(6)-dimethylallyladenosine synthase from Koribacter versatilis (strain Ellin345).